Consider the following 61-residue polypeptide: Sec-independent protein translocase protein TatA (61 aa).

Residues 1 to 21 (MFSNIGFPGLILILVAVLILF) form a helical membrane-spanning segment.

This sequence belongs to the TatA/E family. As to quaternary structure, forms a complex with TatC.

Its subcellular location is the cell membrane. In terms of biological role, part of the twin-arginine translocation (Tat) system that transports large folded proteins containing a characteristic twin-arginine motif in their signal peptide across membranes. TatA could form the protein-conducting channel of the Tat system. The polypeptide is Sec-independent protein translocase protein TatA (Bacillus anthracis (strain A0248)).